A 185-amino-acid polypeptide reads, in one-letter code: Protein TIFY 5 (185 aa).

One can recognise a Tify domain in the interval 38–72 (AAEARRNLTIFYNGRMCAVNVTELQARTIISMASQ). Residues 77–185 (KQQQQQIQGR…RAAAPLYARR (109 aa)) are disordered. Residues 137–157 (PRAGLQAAAAAAPTMNQPPAA) show a composition bias toward low complexity. Positions 155–182 (PAASGLSMKRSLQRFLEKRKTRAAAPLY) match the Jas motif. The short motif at 162–169 (MKRSLQRF) is the Nuclear localization signal element.

The protein belongs to the TIFY/JAZ family. Ubiquitinated. Targeted for degradation by the SCF(COI1) E3 ubiquitin ligase-proteasome pathway during jasmonate signaling.

It localises to the nucleus. In terms of biological role, repressor of jasmonate responses. This chain is Protein TIFY 5, found in Oryza sativa subsp. indica (Rice).